A 675-amino-acid polypeptide reads, in one-letter code: MYLLPLLFPLLNLFISCILGKFLGKRVLFVLVINMLFSAIFSFWIFYEVGINKSVCYIDLGPWFHIGLLKLNWLFLFDSITSVMLVLVVFVSLLVHLYSIDYMSGDPHIIRFLGYLSLFTFFMLMLVTSGNFVQLFLGWEGVGLSSYLLINFWYTRIQANKSAMKAIIVNRFGDFGIYFSLLVIFFFFKSFDFGVVFNLVQFLDTQPRMSFLGFSLNRVDLIVIFLFLGAIGKSAQLGLHTWLPDAMEGPTPVSALIHAATMVTAGVFVLIRSSPILEYSSTGLFLVSLIGGLTALFAGTVGLVQYDIKKVIAYSTCSQLGYMFFACGMSNYSVGLFHLFNHGFFKALLFLGAGSVIHALLDEQDMRKMGGLIKLMPLTYVAILVGSLSLTGFPFLTGFYSKEVVLEIAFSKFSINSFFIYWLGVFAAFITSFYSIRLMYLVFFARPNSHARAVNSSHESSSFIFYVLAFLGFLSIFIGFIFKDLFIGLGTDFWANSIFNLYVNSDILYAEFLDYYYKLIPLVFSIVGLFFSLFVYFVIYDYTVFVVKNKFFRYAYFFLAKKWYFDLLYNNIFVFNLLSSFYLLTFKIIDRGLIELFGPLSFVRLINKSSIIFSSFQTGFLYNYIFVVLLGLMFFIKLTSSLFFPSFNSFFNFGLFICLLSLIIFLSFGNKKQNI.

The next 19 helical transmembrane spans lie at 3–23 (LLPLLFPLLNLFISCILGKFL), 27–47 (VLFVLVINMLFSAIFSFWIFY), 75–95 (FLFDSITSVMLVLVVFVSLLV), 108–127 (HIIRFLGYLSLFTFFMLMLV), 132–154 (FVQLFLGWEGVGLSSYLLINFWY), 177–197 (IYFSLLVIFFFFKSFDFGVVF), 211–231 (FLGFSLNRVDLIVIFLFLGAI), 251–271 (TPVSALIHAATMVTAGVFVLI), 284–304 (LFLVSLIGGLTALFAGTVGLV), 311–329 (VIAYSTCSQLGYMFFACGM), 334–354 (VGLFHLFNHGFFKALLFLGAG), 380–400 (YVAILVGSLSLTGFPFLTGFY), 413–433 (FSINSFFIYWLGVFAAFITSF), 462–482 (SFIFYVLAFLGFLSIFIGFIF), 519–539 (LIPLVFSIVGLFFSLFVYFVI), 564–584 (YFDLLYNNIFVFNLLSSFYLL), 593–613 (LIELFGPLSFVRLINKSSIIF), 624–644 (YIFVVLLGLMFFIKLTSSLFF), and 649–669 (SFFNFGLFICLLSLIIFLSFG).

This sequence belongs to the complex I subunit 5 family.

It is found in the mitochondrion inner membrane. The catalysed reaction is a ubiquinone + NADH + 5 H(+)(in) = a ubiquinol + NAD(+) + 4 H(+)(out). Its function is as follows. Core subunit of the mitochondrial membrane respiratory chain NADH dehydrogenase (Complex I) that is believed to belong to the minimal assembly required for catalysis. Complex I functions in the transfer of electrons from NADH to the respiratory chain. The immediate electron acceptor for the enzyme is believed to be ubiquinone. This Acanthamoeba castellanii (Amoeba) protein is NADH-ubiquinone oxidoreductase chain 5 (ND5).